The primary structure comprises 224 residues: MTVIVLSGPIGAGKSSLTGILSKYLGTNPFYESVDDNPVLPLFYENPKKYAFLLQVYFLNTRFRSIKSALTDDNNVLDRSIYEDALFFQMNADIGRATPEEVDTYYELLHNMMSELDRMPKKNPDLLVHIDVSYDTMLKRIQKRGRNYEQLSYDPTLEDYYKRLLRYYKPWYEKYDYSPKMTIDGDKLDFMASEEDRQEVLNQIVAKLKEMGKFEDDWKPNLVK.

8–16 serves as a coordination point for ATP; sequence GPIGAGKSS. 3 residues coordinate substrate: E32, Y44, and Q55. The active-site Proton acceptor is the D78. Substrate contacts are provided by R79, D84, and E149.

It belongs to the DCK/DGK family. In terms of assembly, heterodimer of a deoxyadenosine (DAK) and a deoxyguanosine kinase (DGK).

It catalyses the reaction 2'-deoxyguanosine + ATP = dGMP + ADP + H(+). Its function is as follows. DGK/DAK plays an essential role in generating the deoxyribonucleotide precursors, dGTP and dATP, for DNA metabolism. The sequence is that of Deoxyguanosine kinase from Lactobacillus johnsonii (strain CNCM I-12250 / La1 / NCC 533).